The chain runs to 220 residues: UPF0319 protein YccT (220 aa).

An N-terminal signal peptide occupies residues 1–20; that stretch reads MKTGIVTTLIALCLPVSVFA.

This sequence belongs to the UPF0319 family.

The polypeptide is UPF0319 protein YccT (Escherichia coli O139:H28 (strain E24377A / ETEC)).